The sequence spans 427 residues: GTPase Obg (427 aa).

In terms of domain architecture, Obg spans 1-158 (MFVDQVKIYV…RDVTLELKVL (158 aa)). Residues 159 to 329 (ADVGLVGFPS…LLFEVANLLE (171 aa)) form the OBG-type G domain. GTP is bound by residues 165 to 172 (GFPSVGKS), 190 to 194 (FTTIV), 212 to 215 (DLPG), 282 to 285 (NKMD), and 310 to 312 (SAV). Mg(2+) contacts are provided by serine 172 and threonine 192. The 79-residue stretch at 349–427 (YKFESESNFE…ILEYQFEFID (79 aa)) folds into the OCT domain.

This sequence belongs to the TRAFAC class OBG-HflX-like GTPase superfamily. OBG GTPase family. As to quaternary structure, monomer. The cofactor is Mg(2+).

The protein resides in the cytoplasm. An essential GTPase which binds GTP, GDP and possibly (p)ppGpp with moderate affinity, with high nucleotide exchange rates and a fairly low GTP hydrolysis rate. Plays a role in control of the cell cycle, stress response, ribosome biogenesis and in those bacteria that undergo differentiation, in morphogenesis control. This Bacillus mycoides (strain KBAB4) (Bacillus weihenstephanensis) protein is GTPase Obg.